The primary structure comprises 103 residues: Small ribosomal subunit protein uS10 (103 aa).

It belongs to the universal ribosomal protein uS10 family. Part of the 30S ribosomal subunit.

Functionally, involved in the binding of tRNA to the ribosomes. The chain is Small ribosomal subunit protein uS10 from Azotobacter vinelandii (strain DJ / ATCC BAA-1303).